Here is a 90-residue protein sequence, read N- to C-terminus: Small ribosomal subunit protein mS37 (90 aa).

Cysteine 27 and cysteine 58 are disulfide-bonded.

This sequence belongs to the mitochondrion-specific ribosomal protein mS37 family. In terms of assembly, component of the mitochondrial small ribosomal subunit (mt-SSU). Mature N.crassa 74S mitochondrial ribosomes consist of a small (37S) and a large (54S) subunit. The 37S small subunit contains a 16S ribosomal RNA (16S mt-rRNA) and 32 different proteins. The 54S large subunit contains a 23S rRNA (23S mt-rRNA) and 42 different proteins.

It is found in the mitochondrion. Functionally, component of the mitochondrial ribosome (mitoribosome), a dedicated translation machinery responsible for the synthesis of mitochondrial genome-encoded proteins, including at least some of the essential transmembrane subunits of the mitochondrial respiratory chain. The mitoribosomes are attached to the mitochondrial inner membrane and translation products are cotranslationally integrated into the membrane. This Neurospora crassa (strain ATCC 24698 / 74-OR23-1A / CBS 708.71 / DSM 1257 / FGSC 987) protein is Small ribosomal subunit protein mS37 (mrp10).